Here is a 292-residue protein sequence, read N- to C-terminus: Probable ABC transporter permease protein YurN (292 aa).

Helical transmembrane passes span 7–27 (IIPY…YIPI), 70–90 (VLYA…LAAV), 106–126 (VFFL…DFIY), 160–180 (VIFV…IVSI), 215–235 (FVAV…PYIL), and 260–280 (MMGY…ALSL). The region spanning 66–282 (LTNNVLYAVI…IITLALSLMQ (217 aa)) is the ABC transmembrane type-1 domain.

This sequence belongs to the binding-protein-dependent transport system permease family. MalFG subfamily.

The protein localises to the cell membrane. Functionally, probably part of the binding-protein-dependent transport system YurMNO. Probably responsible for the translocation of the substrate across the membrane. The sequence is that of Probable ABC transporter permease protein YurN (yurN) from Bacillus subtilis (strain 168).